The primary structure comprises 119 residues: Holo-[acyl-carrier-protein] synthase (119 aa).

Asp7 and Glu53 together coordinate Mg(2+).

This sequence belongs to the P-Pant transferase superfamily. AcpS family. Requires Mg(2+) as cofactor.

Its subcellular location is the cytoplasm. The catalysed reaction is apo-[ACP] + CoA = holo-[ACP] + adenosine 3',5'-bisphosphate + H(+). In terms of biological role, transfers the 4'-phosphopantetheine moiety from coenzyme A to a Ser of acyl-carrier-protein. This Dehalococcoides mccartyi (strain CBDB1) protein is Holo-[acyl-carrier-protein] synthase.